Reading from the N-terminus, the 93-residue chain is Molybdopterin synthase sulfur carrier subunit (93 aa).

Residue Gly-93 is modified to 1-thioglycine; alternate. Residue Gly-93 is modified to Glycyl adenylate; alternate.

The protein belongs to the MoaD family. MOCS2A subfamily. In terms of assembly, heterotetramer; composed of 2 small (MOCS2A) and 2 large (MOCS2B) subunits. C-terminal thiocarboxylation occurs in 2 steps, it is first acyl-adenylated (-COAMP) via the hesA/moeB/thiF part of UBA4, then thiocarboxylated (-COSH) via the rhodanese domain of UBA4.

Its subcellular location is the cytoplasm. It functions in the pathway cofactor biosynthesis; molybdopterin biosynthesis. Functionally, acts as a sulfur carrier required for molybdopterin biosynthesis. Component of the molybdopterin synthase complex that catalyzes the conversion of precursor Z into molybdopterin by mediating the incorporation of 2 sulfur atoms into precursor Z to generate a dithiolene group. In the complex, serves as sulfur donor by being thiocarboxylated (-COSH) at its C-terminus by UBA4. After interaction with MOCS2B, the sulfur is then transferred to precursor Z to form molybdopterin. This chain is Molybdopterin synthase sulfur carrier subunit, found in Mycosarcoma maydis (Corn smut fungus).